Reading from the N-terminus, the 236-residue chain is Eukaryotic translation initiation factor 3 subunit J (236 aa).

The interval 1 to 84 (MADDWESAAD…LREEEAEAER (84 aa)) is disordered. Residues 28–46 (GEDEDEDIKDSWEDEEEKK) show a composition bias toward acidic residues. Basic and acidic residues-rich tracts occupy residues 47-58 (DEEKPTKTEAPA) and 68-77 (AKLEQQALRE).

This sequence belongs to the eIF-3 subunit J family. In terms of assembly, component of the eukaryotic translation initiation factor 3 (eIF-3) complex. The eIF-3 complex interacts with pix.

The protein localises to the cytoplasm. Functionally, component of the eukaryotic translation initiation factor 3 (eIF-3) complex, which is involved in protein synthesis of a specialized repertoire of mRNAs and, together with other initiation factors, stimulates binding of mRNA and methionyl-tRNAi to the 40S ribosome. The eIF-3 complex specifically targets and initiates translation of a subset of mRNAs involved in cell proliferation. This is Eukaryotic translation initiation factor 3 subunit J from Drosophila sechellia (Fruit fly).